A 426-amino-acid polypeptide reads, in one-letter code: Histidine--tRNA ligase (426 aa).

The protein belongs to the class-II aminoacyl-tRNA synthetase family. Homodimer.

The protein resides in the cytoplasm. The catalysed reaction is tRNA(His) + L-histidine + ATP = L-histidyl-tRNA(His) + AMP + diphosphate + H(+). In Streptococcus equi subsp. zooepidemicus (strain MGCS10565), this protein is Histidine--tRNA ligase.